The chain runs to 114 residues: Iron-sulfur cluster insertion protein ErpA (114 aa).

Iron-sulfur cluster contacts are provided by C42, C106, and C108.

This sequence belongs to the HesB/IscA family. As to quaternary structure, homodimer. Iron-sulfur cluster is required as a cofactor.

Its function is as follows. Required for insertion of 4Fe-4S clusters for at least IspG. The chain is Iron-sulfur cluster insertion protein ErpA from Haemophilus influenzae (strain PittGG).